The chain runs to 405 residues: MGEILSVKDIKFKKGEKVFIRCDFNVPMDEFLNITDDRRIRAAIPTIRYCLDEGCSVILASHLGRPKNGYEAKFSLEPVAKRLARRMNREIKFVNDVIGKEAVEAVKNLKENEVLLLDNLRFEKGETKNDPEFAQKLASYANYYINDAFGVCHRAHASVEAITKFYDNKHKAAGFLLIKEVNFAANLTKRPVRPFVAVAGGSKVSGKLQALKNLLPKVDKLIIGGGMAFTFLKAIGYEIGNSLLEEDLVEEALNILREGKRLGVKIYIPVDAIVAPAISQDSVMKNVTVQEIPAGWMGLDIGPATIALFREALSDAQTIWWNGPMGVFEIDKFARGSLRMSHAIAESNATTVVGGGDTADVVERAGNSDEMTFISTGGGASLELIEGKELPGVRVLTIKNDEMEC.

Substrate is bound by residues 23-25 (DFN), Arg39, 62-65 (HLGR), Arg121, and Arg154. Residues Lys207, Gly298, Glu329, and 355–358 (GGDT) contribute to the ATP site.

It belongs to the phosphoglycerate kinase family. Monomer.

The protein resides in the cytoplasm. It carries out the reaction (2R)-3-phosphoglycerate + ATP = (2R)-3-phospho-glyceroyl phosphate + ADP. It functions in the pathway carbohydrate degradation; glycolysis; pyruvate from D-glyceraldehyde 3-phosphate: step 2/5. This chain is Phosphoglycerate kinase, found in Campylobacter hominis (strain ATCC BAA-381 / DSM 21671 / CCUG 45161 / LMG 19568 / NCTC 13146 / CH001A).